We begin with the raw amino-acid sequence, 208 residues long: Small ribosomal subunit protein uS4 (208 aa).

In terms of domain architecture, S4 RNA-binding spans 98–161; that stretch reads QRLDNLVYRM…KNNPQILRAV (64 aa).

Belongs to the universal ribosomal protein uS4 family. Part of the 30S ribosomal subunit. Contacts protein S5. The interaction surface between S4 and S5 is involved in control of translational fidelity.

In terms of biological role, one of the primary rRNA binding proteins, it binds directly to 16S rRNA where it nucleates assembly of the body of the 30S subunit. Functionally, with S5 and S12 plays an important role in translational accuracy. The chain is Small ribosomal subunit protein uS4 from Campylobacter hominis (strain ATCC BAA-381 / DSM 21671 / CCUG 45161 / LMG 19568 / NCTC 13146 / CH001A).